Consider the following 76-residue polypeptide: Exodeoxyribonuclease 7 small subunit (76 aa).

This sequence belongs to the XseB family. In terms of assembly, heterooligomer composed of large and small subunits.

The protein localises to the cytoplasm. It carries out the reaction Exonucleolytic cleavage in either 5'- to 3'- or 3'- to 5'-direction to yield nucleoside 5'-phosphates.. In terms of biological role, bidirectionally degrades single-stranded DNA into large acid-insoluble oligonucleotides, which are then degraded further into small acid-soluble oligonucleotides. This chain is Exodeoxyribonuclease 7 small subunit, found in Enterococcus faecalis (strain ATCC 700802 / V583).